The following is a 365-amino-acid chain: Spore germination protein A2 (365 aa).

11 consecutive transmembrane segments (helical) span residues 12–32, 45–65, 85–105, 122–142, 148–168, 187–207, 223–243, 250–270, 275–295, 303–323, and 338–358; these read TFQG…LTLP, WITL…NTLI, WIGS…ASFE, PIQV…VGGL, LFPF…GISF, IANS…MLFL, LGFL…VGAL, TLIW…IFIE, FLLV…GYFA, FGLS…YFSL, and LGYI…IVAL.

It belongs to the amino acid-polyamine-organocation (APC) superfamily. Spore germination protein (SGP) (TC 2.A.3.9) family.

It localises to the cell membrane. In terms of biological role, involved in the germinative response to L-alanine. Could be an amino acid transporter. Forms a complex at the inner spore membrane which acts as a receptor for L-alanine, thus is involved in the stimulation of germination in response to alanine. Can stimulate germination in the absence of gerD and gerK gene products (fructose and glucose receptors, respectively), but the response is improved in their presence. The sequence is that of Spore germination protein A2 (gerAB) from Bacillus subtilis (strain 168).